A 242-amino-acid polypeptide reads, in one-letter code: Methylthioribulose-1-phosphate dehydratase (242 aa).

The disordered stretch occupies residues 1 to 23; it reads MTDQREEPQGSNDHLVRSSDPEH. Residue Cys-102 coordinates substrate. His-119 and His-121 together coordinate Zn(2+). Glu-148 serves as the catalytic Proton donor/acceptor. Zn(2+) is bound at residue His-204.

Belongs to the aldolase class II family. MtnB subfamily. Requires Zn(2+) as cofactor.

The protein resides in the cytoplasm. The enzyme catalyses 5-(methylsulfanyl)-D-ribulose 1-phosphate = 5-methylsulfanyl-2,3-dioxopentyl phosphate + H2O. Its pathway is amino-acid biosynthesis; L-methionine biosynthesis via salvage pathway; L-methionine from S-methyl-5-thio-alpha-D-ribose 1-phosphate: step 2/6. Catalyzes the dehydration of methylthioribulose-1-phosphate (MTRu-1-P) into 2,3-diketo-5-methylthiopentyl-1-phosphate (DK-MTP-1-P). In Uncinocarpus reesii (strain UAMH 1704), this protein is Methylthioribulose-1-phosphate dehydratase.